A 308-amino-acid polypeptide reads, in one-letter code: tRNA dimethylallyltransferase (308 aa).

16 to 23 (GPTASGKT) lines the ATP pocket. 18–23 (TASGKT) provides a ligand contact to substrate. The tract at residues 41–44 (DSQQ) is interaction with substrate tRNA.

It belongs to the IPP transferase family. As to quaternary structure, monomer. Mg(2+) is required as a cofactor.

It catalyses the reaction adenosine(37) in tRNA + dimethylallyl diphosphate = N(6)-dimethylallyladenosine(37) in tRNA + diphosphate. Catalyzes the transfer of a dimethylallyl group onto the adenine at position 37 in tRNAs that read codons beginning with uridine, leading to the formation of N6-(dimethylallyl)adenosine (i(6)A). The chain is tRNA dimethylallyltransferase from Myxococcus xanthus (strain DK1622).